A 70-amino-acid polypeptide reads, in one-letter code: DNA-directed RNA polymerase subunit omega (70 aa).

It belongs to the RNA polymerase subunit omega family. The RNAP catalytic core consists of 2 alpha, 1 beta, 1 beta' and 1 omega subunit. When a sigma factor is associated with the core the holoenzyme is formed, which can initiate transcription.

The catalysed reaction is RNA(n) + a ribonucleoside 5'-triphosphate = RNA(n+1) + diphosphate. Its function is as follows. Promotes RNA polymerase assembly. Latches the N- and C-terminal regions of the beta' subunit thereby facilitating its interaction with the beta and alpha subunits. This Bacillus mycoides (strain KBAB4) (Bacillus weihenstephanensis) protein is DNA-directed RNA polymerase subunit omega.